The chain runs to 85 residues: Protein RALF-like 28 (85 aa).

Residues 1 to 31 (MSILKETKRFMVVAMFIACVFISNNMNVAVA) form the signal peptide. Intrachain disulfides connect Cys48–Cys53 and Cys66–Cys72. The disordered stretch occupies residues 60–85 (NPYHRGCEKSKRCRGPDPPALPRKMI). The segment covering 75–85 (PDPPALPRKMI) has biased composition (pro residues).

This sequence belongs to the plant rapid alkalinization factor (RALF) family.

It localises to the secreted. Its function is as follows. Cell signaling peptide that may regulate plant stress, growth, and development. Mediates a rapid alkalinization of extracellular space by mediating a transient increase in the cytoplasmic Ca(2+) concentration leading to a calcium-dependent signaling events through a cell surface receptor and a concomitant activation of some intracellular mitogen-activated protein kinases. The sequence is that of Protein RALF-like 28 (RALFL28) from Arabidopsis thaliana (Mouse-ear cress).